The chain runs to 857 residues: Oxidation resistance protein 1 (857 aa).

Residues 43-74 form a disordered region; that stretch reads MARPPQALRSDTGQRKTLEKKDGRRMSFQRPK. Positions 54–67 are enriched in basic and acidic residues; that stretch reads TGQRKTLEKKDGRR. One can recognise a LysM domain in the interval 77–120; that stretch reads MEYTVESRDSLNSIALKFDTTPNELVQLNKLFSRAVVPGQLLYV. Residues 131–146 show a composition bias toward low complexity; it reads SSPSLSPISLLSPTSS. Residues 131 to 183 are disordered; sequence SSPSLSPISLLSPTSSEAEFEKRTDTERMPHKESTSSPAYSTTRQSRVVSSTS. Over residues 149 to 164 the composition is skewed to basic and acidic residues; that stretch reads EFEKRTDTERMPHKES. Positions 171 to 182 are enriched in low complexity; the sequence is STTRQSRVVSST. One can recognise a GRAM domain in the interval 190-249; that stretch reads TEKFLKINCKYITDGKGIVTGVLLVTPNNIMFDPHKNDLLVQENGCEEYGIMCPMEEVTS. 4 disordered regions span residues 300–353, 372–409, 421–450, and 673–694; these read GNDS…SVQT, SDDV…DGLD, EANE…GDQN, and KQAT…LSDP. The segment covering 327–342 has biased composition (basic and acidic residues); that stretch reads PIREEHLSSDELRQDK. 3 stretches are compositionally biased toward polar residues: residues 343–353, 381–393, and 432–449; these read SSGTSSESVQT, PSGN…SSIN, and SKNN…TGDQ. The region spanning 696 to 857 is the TLDc domain; sequence SLLQTEQIEK…VQDIEIWAFE (162 aa).

It belongs to the OXR1 family.

Its subcellular location is the mitochondrion. May be involved in protection from oxidative damage. This is Oxidation resistance protein 1 (oxr1) from Xenopus laevis (African clawed frog).